Here is a 39-residue protein sequence, read N- to C-terminus: Natriuretic peptide TcNPa (39 aa).

A propeptide spanning residues 1 to 8 (SGSETAKI) is cleaved from the precursor. Cysteine 12 and cysteine 28 are joined by a disulfide. The O-linked (GalNAc...) threonine glycan is linked to threonine 35.

Belongs to the natriuretic peptide family. In terms of processing, O-linked glycans consist of galactosyl-beta(1-3)-N-acetylgalactosamine (Gal-GalNAc). The synthetic non-glycosylated form shows higher potency on natriuretic receptors (EC(50)=672.90 nM) and NPR2 (EC(50)=261.0 nM). Expressed by the venom gland.

The protein localises to the secreted. Functionally, snake venom natriuretic peptide that targets both NPR1 (EC(50)=1080.0 nM) and NPR2 (EC(50)=328.60 nM). Exhibits hypotensive and vasodepressor activities. This Tropidechis carinatus (Australian rough-scaled snake) protein is Natriuretic peptide TcNPa.